The primary structure comprises 83 residues: uncharacterized protein (83 aa).

It belongs to the chlamydial CPn_0710/CT_666/TC_0037 family.

This is an uncharacterized protein from Chlamydia trachomatis serovar D (strain ATCC VR-885 / DSM 19411 / UW-3/Cx).